A 370-amino-acid polypeptide reads, in one-letter code: DNA-directed RNA polymerase II subunit GRINL1A (370 aa).

Positions 1 to 20 (MSSLPRGFEPQTPEDLGQRS) are disordered. Residues 15 to 69 (DLGQRSLAELREMLKRQERLLRNVKFICKLPDKGKKISDAVTKLKAAIAEREEVR) adopt a coiled-coil conformation. Positions 29-68 (KRQERLLRNVKFICKLPDKGKKISDAVTKLKAAIAEREEV) are important for transcription repressor activity. Disordered stretches follow at residues 93 to 172 (DGDR…ASEG), 204 to 226 (DPTE…WSGP), and 241 to 283 (KNPM…RRDR). The segment covering 101-131 (NSDQILDTSSPVPGCSSVANITSSQTTSRQQ) has biased composition (polar residues). Over residues 138-152 (RGGDAEAAEAEHTVS) the composition is skewed to basic and acidic residues. A compositionally biased stretch (low complexity) spans 155 to 170 (PTSSSGAPAPSSSQAS). The segment covering 205-214 (PTEHHSEGNR) has biased composition (basic and acidic residues). An interaction with Pol II region spans residues 228 to 299 (KKPHYMEVLE…TAARLLPLHH (72 aa)). A compositionally biased stretch (polar residues) spans 254–266 (VLPSQPRDSSSAC). Serine 271 is modified (phosphoserine). The tract at residues 300 to 315 (LPTQLLSIEESLALQR) is important for transcription repressor activity. The stretch at 303 to 328 (QLLSIEESLALQRQQKQSYEEIQAKL) forms a coiled coil. The segment at 316-341 (QQKQSYEEIQAKLAAQKLAERLNIKM) is interaction with Pol II. A disordered region spans residues 340–370 (KMQSYNPEGESSRKYREVRDEDDDQSSEDEF). Residues 349–358 (ESSRKYREVR) are compositionally biased toward basic and acidic residues. A compositionally biased stretch (acidic residues) spans 359 to 370 (DEDDDQSSEDEF).

The protein belongs to the GRINL1 family. As to quaternary structure, component of the Pol II(G) complex, which contains the RNA polymerase II (Pol II) core complex subunits and POLR2M and appears to be an abundant form of Pol II. Dephosphorylated at Ser-271 by the PNUTS-PP1 complex, promoting RNA polymerase II transcription pause-release.

The protein resides in the nucleus. In terms of biological role, appears to be a stable component of the Pol II(G) complex form of RNA polymerase II (Pol II). Pol II synthesizes mRNA precursors and many functional non-coding RNAs and is the central component of the basal RNA polymerase II transcription machinery. May play a role in Mediator complex-dependent regulation of transcription activation. Acts in vitro as a negative regulator of transcriptional activation; this repression is relieved by the Mediator complex, which restores Pol II(G) activator-dependent transcription to a level equivalent to that of Pol II. In Bos taurus (Bovine), this protein is DNA-directed RNA polymerase II subunit GRINL1A (POLR2M).